We begin with the raw amino-acid sequence, 131 residues long: Small ribosomal subunit protein uS8 (131 aa).

The protein belongs to the universal ribosomal protein uS8 family. In terms of assembly, part of the 30S ribosomal subunit. Contacts proteins S5 and S12.

Functionally, one of the primary rRNA binding proteins, it binds directly to 16S rRNA central domain where it helps coordinate assembly of the platform of the 30S subunit. The polypeptide is Small ribosomal subunit protein uS8 (Mesomycoplasma hyopneumoniae (strain 7448) (Mycoplasma hyopneumoniae)).